The primary structure comprises 390 residues: GTPase Obg (390 aa).

One can recognise an Obg domain in the interval 1 to 159; sequence MKFVDEATIL…RELMLELLLL (159 aa). In terms of domain architecture, OBG-type G spans 160–333; that stretch reads ADVGMLGLPN…LCWDVMNFLN (174 aa). Residues 166-173, 191-195, 213-216, 283-286, and 314-316 contribute to the GTP site; these read GLPNAGKS, FTTLI, DIPG, NKID, and SAA. Residues Ser173 and Thr193 each contribute to the Mg(2+) site. The span at 363–384 shows a compositional bias: acidic residues; that stretch reads EVEAEAESEDDDDWDEEDDDGV. Residues 363–390 are disordered; it reads EVEAEAESEDDDDWDEEDDDGVEFIYER.

The protein belongs to the TRAFAC class OBG-HflX-like GTPase superfamily. OBG GTPase family. Monomer. The cofactor is Mg(2+).

Its subcellular location is the cytoplasm. In terms of biological role, an essential GTPase which binds GTP, GDP and possibly (p)ppGpp with moderate affinity, with high nucleotide exchange rates and a fairly low GTP hydrolysis rate. Plays a role in control of the cell cycle, stress response, ribosome biogenesis and in those bacteria that undergo differentiation, in morphogenesis control. The sequence is that of GTPase Obg from Yersinia enterocolitica serotype O:8 / biotype 1B (strain NCTC 13174 / 8081).